The primary structure comprises 365 residues: Chorismate synthase (365 aa).

Arg-46 is an NADP(+) binding site. FMN-binding positions include 124–126 (RAS), Gly-284, 299–303 (KPTPS), and Arg-326.

The protein belongs to the chorismate synthase family. FMNH2 is required as a cofactor.

The catalysed reaction is 5-O-(1-carboxyvinyl)-3-phosphoshikimate = chorismate + phosphate. It functions in the pathway metabolic intermediate biosynthesis; chorismate biosynthesis; chorismate from D-erythrose 4-phosphate and phosphoenolpyruvate: step 7/7. Functionally, catalyzes the anti-1,4-elimination of the C-3 phosphate and the C-6 proR hydrogen from 5-enolpyruvylshikimate-3-phosphate (EPSP) to yield chorismate, which is the branch point compound that serves as the starting substrate for the three terminal pathways of aromatic amino acid biosynthesis. This reaction introduces a second double bond into the aromatic ring system. The protein is Chorismate synthase of Pyrobaculum neutrophilum (strain DSM 2338 / JCM 9278 / NBRC 100436 / V24Sta) (Thermoproteus neutrophilus).